Reading from the N-terminus, the 208-residue chain is Small ribosomal subunit protein uS4 (208 aa).

The 62-residue stretch at 97–158 (TRLDNVIYRM…RAQKYLCVQE (62 aa)) folds into the S4 RNA-binding domain.

It belongs to the universal ribosomal protein uS4 family. Part of the 30S ribosomal subunit. Contacts protein S5. The interaction surface between S4 and S5 is involved in control of translational fidelity.

Functionally, one of the primary rRNA binding proteins, it binds directly to 16S rRNA where it nucleates assembly of the body of the 30S subunit. In terms of biological role, with S5 and S12 plays an important role in translational accuracy. This is Small ribosomal subunit protein uS4 from Xylella fastidiosa (strain 9a5c).